The primary structure comprises 120 residues: Large ribosomal subunit protein uL18 (120 aa).

The protein belongs to the universal ribosomal protein uL18 family. In terms of assembly, part of the 50S ribosomal subunit; part of the 5S rRNA/L5/L18/L25 subcomplex. Contacts the 5S and 23S rRNAs.

In terms of biological role, this is one of the proteins that bind and probably mediate the attachment of the 5S RNA into the large ribosomal subunit, where it forms part of the central protuberance. This chain is Large ribosomal subunit protein uL18, found in Trichodesmium erythraeum (strain IMS101).